The primary structure comprises 212 residues: Thiamine-phosphate synthase (212 aa).

Residues 40–44 (QFREK) and Asn-75 contribute to the 4-amino-2-methyl-5-(diphosphooxymethyl)pyrimidine site. Residues Asp-76 and Asp-95 each coordinate Mg(2+). Ser-113 is a 4-amino-2-methyl-5-(diphosphooxymethyl)pyrimidine binding site. 139–141 (TSS) serves as a coordination point for 2-[(2R,5Z)-2-carboxy-4-methylthiazol-5(2H)-ylidene]ethyl phosphate. Position 142 (Lys-142) interacts with 4-amino-2-methyl-5-(diphosphooxymethyl)pyrimidine. Residues Gly-171 and 191–192 (IS) contribute to the 2-[(2R,5Z)-2-carboxy-4-methylthiazol-5(2H)-ylidene]ethyl phosphate site.

This sequence belongs to the thiamine-phosphate synthase family. The cofactor is Mg(2+).

It catalyses the reaction 2-[(2R,5Z)-2-carboxy-4-methylthiazol-5(2H)-ylidene]ethyl phosphate + 4-amino-2-methyl-5-(diphosphooxymethyl)pyrimidine + 2 H(+) = thiamine phosphate + CO2 + diphosphate. It carries out the reaction 2-(2-carboxy-4-methylthiazol-5-yl)ethyl phosphate + 4-amino-2-methyl-5-(diphosphooxymethyl)pyrimidine + 2 H(+) = thiamine phosphate + CO2 + diphosphate. The catalysed reaction is 4-methyl-5-(2-phosphooxyethyl)-thiazole + 4-amino-2-methyl-5-(diphosphooxymethyl)pyrimidine + H(+) = thiamine phosphate + diphosphate. It functions in the pathway cofactor biosynthesis; thiamine diphosphate biosynthesis; thiamine phosphate from 4-amino-2-methyl-5-diphosphomethylpyrimidine and 4-methyl-5-(2-phosphoethyl)-thiazole: step 1/1. Condenses 4-methyl-5-(beta-hydroxyethyl)thiazole monophosphate (THZ-P) and 2-methyl-4-amino-5-hydroxymethyl pyrimidine pyrophosphate (HMP-PP) to form thiamine monophosphate (TMP). The sequence is that of Thiamine-phosphate synthase from Staphylococcus epidermidis (strain ATCC 35984 / DSM 28319 / BCRC 17069 / CCUG 31568 / BM 3577 / RP62A).